The chain runs to 159 residues: Transcriptional repressor NrdR (159 aa).

Residues 3-34 (CPFCRHEDTQVVDSRVSEDGAAIRRRRRCSAC) fold into a zinc finger. The ATP-cone domain occupies 49 to 139 (PAVVKKDGSR…VYRRFEDVSE (91 aa)).

It belongs to the NrdR family. The cofactor is Zn(2+).

In terms of biological role, negatively regulates transcription of bacterial ribonucleotide reductase nrd genes and operons by binding to NrdR-boxes. This chain is Transcriptional repressor NrdR, found in Burkholderia multivorans (strain ATCC 17616 / 249).